Consider the following 101-residue polypeptide: MMLEHVLVLSAYLFSIGIYGLITSRNMVRALMCLELILNAVNINFVTFSDFFDSRQLKGDIFSIFVIAIAAAEAAIGSAIVSSIYRNRKSTRINQSTLLNK.

3 consecutive transmembrane segments (helical) span residues 2–22 (MLEH…YGLI), 32–52 (MCLE…SDFF), and 61–81 (IFSI…SAIV).

It belongs to the complex I subunit 4L family. In terms of assembly, NDH is composed of at least 16 different subunits, 5 of which are encoded in the nucleus.

The protein localises to the plastid. It localises to the chloroplast thylakoid membrane. The enzyme catalyses a plastoquinone + NADH + (n+1) H(+)(in) = a plastoquinol + NAD(+) + n H(+)(out). The catalysed reaction is a plastoquinone + NADPH + (n+1) H(+)(in) = a plastoquinol + NADP(+) + n H(+)(out). Functionally, NDH shuttles electrons from NAD(P)H:plastoquinone, via FMN and iron-sulfur (Fe-S) centers, to quinones in the photosynthetic chain and possibly in a chloroplast respiratory chain. The immediate electron acceptor for the enzyme in this species is believed to be plastoquinone. Couples the redox reaction to proton translocation, and thus conserves the redox energy in a proton gradient. The polypeptide is NAD(P)H-quinone oxidoreductase subunit 4L, chloroplastic (Citrus sinensis (Sweet orange)).